We begin with the raw amino-acid sequence, 340 residues long: Methionyl-tRNA formyltransferase (340 aa).

110–113 (SLLP) lines the (6S)-5,6,7,8-tetrahydrofolate pocket.

It belongs to the Fmt family.

The enzyme catalyses L-methionyl-tRNA(fMet) + (6R)-10-formyltetrahydrofolate = N-formyl-L-methionyl-tRNA(fMet) + (6S)-5,6,7,8-tetrahydrofolate + H(+). Attaches a formyl group to the free amino group of methionyl-tRNA(fMet). The formyl group appears to play a dual role in the initiator identity of N-formylmethionyl-tRNA by promoting its recognition by IF2 and preventing the misappropriation of this tRNA by the elongation apparatus. The chain is Methionyl-tRNA formyltransferase from Synechococcus sp. (strain WH7803).